Here is a 67-residue protein sequence, read N- to C-terminus: Small ribosomal subunit protein eS17 (67 aa).

The protein belongs to the eukaryotic ribosomal protein eS17 family.

In Thermococcus sibiricus (strain DSM 12597 / MM 739), this protein is Small ribosomal subunit protein eS17.